Here is a 437-residue protein sequence, read N- to C-terminus: MATAAAASNKFESFFETTLEDADPEIFGAIRNELGRQRHEIELIASENIVSRAVLEAQGSIMTNKYAEGYPGKRYYGGCQFVDVAEELAIERAKKLFGCNFANVQPNSGSQMNQAVFLALLQPGDTFMGLDLNSGGHLTHGSPVNMSGKWFKVVSYGVRKEDHLLDMDAIEKTAHETKPKLILAGGTAYSRIWDWKRFREIADAVGAYLMVDMAHIAGLVAGGVHPSPLPHAHVVTTTTHKSLRGPRGGMILCNDEDIAKKMNSAVFPGLQGGPLMHVIAAKAVAFGEALKPSFKVYAESVAANAKALASSLKETGLDIVSGGTDNHLMLVDLRPKNATGKRAEAALGRANITCNKNGIPFDPEKPFVTSGVRLGTPAGTTRGFGQAEFREIGKLIAEVLDGLKIANSDEGNAAVEAAVKAKVVALTDRFPLYPYLG.

(6S)-5,6,7,8-tetrahydrofolate-binding positions include leucine 132 and 136–138 (GHL). Lysine 241 carries the N6-(pyridoxal phosphate)lysine modification.

The protein belongs to the SHMT family. Homodimer. It depends on pyridoxal 5'-phosphate as a cofactor.

The protein resides in the cytoplasm. It catalyses the reaction (6R)-5,10-methylene-5,6,7,8-tetrahydrofolate + glycine + H2O = (6S)-5,6,7,8-tetrahydrofolate + L-serine. It participates in one-carbon metabolism; tetrahydrofolate interconversion. Its pathway is amino-acid biosynthesis; glycine biosynthesis; glycine from L-serine: step 1/1. Functionally, catalyzes the reversible interconversion of serine and glycine with tetrahydrofolate (THF) serving as the one-carbon carrier. This reaction serves as the major source of one-carbon groups required for the biosynthesis of purines, thymidylate, methionine, and other important biomolecules. Also exhibits THF-independent aldolase activity toward beta-hydroxyamino acids, producing glycine and aldehydes, via a retro-aldol mechanism. This chain is Serine hydroxymethyltransferase 1, found in Mesorhizobium japonicum (strain LMG 29417 / CECT 9101 / MAFF 303099) (Mesorhizobium loti (strain MAFF 303099)).